The sequence spans 659 residues: QWRF motif-containing protein 2 (659 aa).

Disordered regions lie at residues 1 to 125, 157 to 221, 291 to 317, 340 to 359, and 371 to 429; these read MVAA…SVTV, SKKK…LDCG, DTDS…ISKS, RLQD…TSSI, and SDAV…NAYN. The segment covering 42 to 72 has biased composition (low complexity); the sequence is SPSPSHSVSSTTTTTTTTTTTTSSSSSSSSS. The segment covering 90–102 has biased composition (polar residues); it reads RSTTNSASNSIKT. The segment covering 172-190 has biased composition (basic and acidic residues); the sequence is STPERRRSTPVRDQRENSK. Polar residues-rich tracts occupy residues 206–216 and 291–303; these read SESVVPNSLSR and DTDS…TNGV. Composition is skewed to low complexity over residues 345-359 and 401-418; these read GSPL…TSSI and ATTT…SRAR. Positions 468-471 match the QWRF motif motif; the sequence is QWRF.

Belongs to the QWRF family.

The sequence is that of QWRF motif-containing protein 2 (QWRF2) from Arabidopsis thaliana (Mouse-ear cress).